Reading from the N-terminus, the 235-residue chain is MSATAPIRIAARAQPAKYAFIIFHGLGDSGAGWTFLAEYLQRDPALASAQFVFPTAPVRPITANNFAPATAWLDVRSWLSHESVDLEGFNESMKLVPKLIEEQVAQGIPYERIWIGGFSQGAALTMGTALSFPHRLGGFLSFSGPPSYRWLEHTVSDANTGAPVFQSHGTMDEVFPSSGAEAVHRSFTSQYGFKNHRLKIYDGLGHSISPQLLDDALAFIKANLDAEKPAPRPAL.

Residues Ser-119, Asp-172, and His-206 each act as charge relay system in the active site.

Belongs to the AB hydrolase superfamily. AB hydrolase 2 family.

It localises to the cytoplasm. The protein resides in the nucleus. The enzyme catalyses S-hexadecanoyl-L-cysteinyl-[protein] + H2O = L-cysteinyl-[protein] + hexadecanoate + H(+). Hydrolyzes fatty acids from S-acylated cysteine residues in proteins with a strong preference for palmitoylated G-alpha proteins over other acyl substrates. Mediates the deacylation of G-alpha proteins such as GPA1 in vivo, but has weak or no activity toward palmitoylated Ras proteins. Has weak lysophospholipase activity in vitro; however such activity may not exist in vivo. This chain is Acyl-protein thioesterase 1, found in Eremothecium gossypii (strain ATCC 10895 / CBS 109.51 / FGSC 9923 / NRRL Y-1056) (Yeast).